The chain runs to 586 residues: Capsid scaffolding protein (586 aa).

Residues His-53, Ser-123, and His-142 each act as charge relay system in the active site. A compositionally biased stretch (basic and acidic residues) spans 251-263 (SEETPENAIKDRS). 4 disordered regions span residues 251 to 288 (SEETPENAIKDRSVSTQTAPSFDISESQQPSGQTHVPA), 330 to 364 (ARRDNDRRPVSPSREFSRRSRDSTHECSPGRDIWP), 458 to 486 (NKRDSEYSENNPRKRSARTISENDPYFPG), and 530 to 586 (SASN…MMAD). The segment covering 264 to 284 (VSTQTAPSFDISESQQPSGQT) has biased composition (polar residues). The tract at residues 312–331 (EDMVYVPFEKYASLLAASAR) is interaction with pAP. 2 interaction with major capsid protein regions span residues 566–586 (DAQTKLKRKKEAAAFAQMMAD) and 567–586 (AQTKLKRKKEAAAFAQMMAD).

It belongs to the herpesviridae capsid scaffolding protein family. In terms of assembly, homomultimer. Interacts with major capsid protein. Exists in a monomer-dimer equilibrium with the dimer being the active species. In terms of processing, capsid scaffolding protein is cleaved by assemblin after formation of the spherical procapsid. As a result, the capsid obtains its mature, icosahedral shape. Cleavages occur at two or more sites: release (R-site) and maturation (M-site).

The protein resides in the host cytoplasm. It is found in the host nucleus. The catalysed reaction is Cleaves -Ala-|-Ser- and -Ala-|-Ala- bonds in the scaffold protein.. Acts as a scaffold protein by binding major capsid protein in the cytoplasm, inducing the nuclear localization of both proteins. Multimerizes in the nucleus such as major capsid protein forms the icosahedral T=16 capsid. Autocatalytic cleavage releases the assembly protein, and subsequently abolishes interaction with major capsid protein. Cleavages products are evicted from the capsid before or during DNA packaging. In terms of biological role, protease that plays an essential role in virion assembly within the nucleus. Catalyzes the cleavage of the assembly protein after formation of the spherical procapsid. By that cleavage, the capsid matures and gains its icosahedral shape. The cleavage sites seem to include -Ala-Ser-, -Ala-Ala-, as well as Ala-Thr bonds. Assemblin and cleavages products are evicted from the capsid before or during DNA packaging. Functionally, plays a major role in capsid assembly. Acts as a scaffold protein by binding major capsid protein. Multimerizes in the nucleus such as major capsid protein forms the icosahedral T=16 capsid. Cleaved by assemblin after capsid completion. The cleavages products are evicted from the capsid before or during DNA packaging. The chain is Capsid scaffolding protein from Gallus gallus (Chicken).